Here is a 435-residue protein sequence, read N- to C-terminus: Dual specificity protein kinase FUZ7 (435 aa).

The tract at residues 1-61 is disordered; it reads MLSSGAGSSI…TIGKSSAVTP (61 aa). The span at 46–59 shows a compositional bias: polar residues; it reads AASNASTIGKSSAV. The region spanning 109–417 is the Protein kinase domain; sequence LKTLSELGAG…PKDLTKHQYV (309 aa). ATP-binding positions include 115-123 and K138; that span reads LGAGNGGTV. D231 (proton acceptor) is an active-site residue. The tract at residues 307 to 359 is disordered; it reads NEEDDDSDADNNYTNEDLAGTLSPTKPAPMISLGQNEKQRRRKSKPAGVSLEG.

It belongs to the protein kinase superfamily. STE Ser/Thr protein kinase family. MAP kinase kinase subfamily.

It carries out the reaction L-seryl-[protein] + ATP = O-phospho-L-seryl-[protein] + ADP + H(+). It catalyses the reaction L-threonyl-[protein] + ATP = O-phospho-L-threonyl-[protein] + ADP + H(+). The catalysed reaction is L-tyrosyl-[protein] + ATP = O-phospho-L-tyrosyl-[protein] + ADP + H(+). Functionally, protein kinase that is necessary for a-locus-dependent processes, such as conjugation tube formation, filament formation, and maintenance of filamentous growth, and for a-locus-independent processes, such as tumor induction and teliospore germination. In Mycosarcoma maydis (Corn smut fungus), this protein is Dual specificity protein kinase FUZ7 (FUZ7).